The sequence spans 264 residues: Nuclear egress protein 1 (264 aa).

The span at 1–12 (MTVHKSRIRRSR) shows a compositional bias: basic residues. Positions 1 to 22 (MTVHKSRIRRSRSLSVTHRIQK) are disordered. The segment at 83 to 187 (CLEFSPYANE…HIVFQSRTLH (105 aa)) adopts a CCCH-type zinc-finger fold.

The protein belongs to the herpesviridae NEC1 protein family. Forms a heterohexameric complex with NEC2. Interacts with capsid vertex specific component 2/CVC2; this interaction directs the capsid to the host inner nuclear membrane to initiate budding. In terms of processing, phosphorylated at serine residues in the N-terminus. This phosphorylation regulates the localization within the inner nuclear membrane.

The protein localises to the host nucleus inner membrane. In terms of biological role, plays an essential role in virion nuclear egress, the first step of virion release from infected cell. Within the host nucleus, NEC1 interacts with the newly formed capsid through the vertexes and directs it to the inner nuclear membrane by associating with NEC2. Induces the budding of the capsid at the inner nuclear membrane as well as its envelopment into the perinuclear space. There, the NEC1/NEC2 complex promotes the fusion of the enveloped capsid with the outer nuclear membrane and the subsequent release of the viral capsid into the cytoplasm where it will reach the secondary budding sites in the host Golgi or trans-Golgi network. The protein is Nuclear egress protein 1 of Human herpesvirus 6A (strain Uganda-1102) (HHV-6 variant A).